The sequence spans 173 residues: Tumor necrosis factor ligand superfamily member 18 (173 aa).

Topologically, residues 1 to 20 (MEEMPLRESSPQRAERCKKS) are cytoplasmic. The chain crosses the membrane as a helical; Signal-anchor for type II membrane protein span at residues 21–41 (WLLCIVALLLMLLCSLGTLIY). The THD domain maps to 40 to 166 (IYTSLKPTAI…TNTYWGIILM (127 aa)). The Extracellular segment spans residues 42–173 (TSLKPTAIES…ILMPDLPFIS (132 aa)). Cysteine 52 and cysteine 72 are oxidised to a cystine. Residue asparagine 74 is glycosylated (N-linked (GlcNAc...) asparagine).

Belongs to the tumor necrosis factor family. As to quaternary structure, homotrimer. Homodimer. Post-translationally, N-glycosylated. Detected in immature and mature dendritic cells and in macrophages (at protein level). Detected in spleen, lung, heart, thymus, monocytes, macrophages, B-cells and dendritic cells.

Its subcellular location is the cell membrane. Its function is as follows. Cytokine that binds to TNFRSF18/AITR/GITR. Regulates T-cell responses. Can function as costimulator and lower the threshold for T-cell activation and T-cell proliferation. Important for interactions between activated T-lymphocytes and endothelial cells. Mediates activation of NF-kappa-B. Triggers increased phosphorylation of STAT1 and up-regulates expression of VCAM1 and ICAM1. Promotes leukocyte adhesion to endothelial cells. Regulates migration of monocytes from the splenic reservoir to sites of inflammation. The protein is Tumor necrosis factor ligand superfamily member 18 (Tnfsf18) of Mus musculus (Mouse).